The chain runs to 150 residues: Ribonuclease K6 (150 aa).

Positions 1 to 23 are cleaved as a signal peptide; sequence MVLCFPLLLLLLVLWGPVCLLHA. Catalysis depends on His38, which acts as the Proton acceptor. Intrachain disulfides connect Cys46–Cys104, Cys60–Cys114, Cys78–Cys129, and Cys85–Cys92. Residue Asn55 is glycosylated (N-linked (GlcNAc...) asparagine). Substrate contacts are provided by residues 61-65 and Lys86; that span reads KHQNT. An N-linked (GlcNAc...) asparagine glycan is attached at Asn100. Substrate is bound at residue Arg105. The active-site Proton donor is His145.

Belongs to the pancreatic ribonuclease family. As to quaternary structure, interacts (via N-terminus) with bacterial lipopolysaccharide (LPS).

It localises to the secreted. The protein resides in the lysosome. It is found in the cytoplasmic granule. In terms of biological role, ribonuclease which shows a preference for the pyrimidines uridine and cytosine. Has potent antibacterial activity against a range of Gram-positive and Gram-negative bacteria, including P.aeruginosa, A.baumanii, M.luteus, S.aureus, E.faecalis, E.faecium, S.saprophyticus and E.coli. Causes loss of bacterial membrane integrity, and also promotes agglutination of Gram-negative bacteria. Probably contributes to urinary tract sterility. Bactericidal activity is independent of RNase activity. This is Ribonuclease K6 (RNASE6) from Macaca mulatta (Rhesus macaque).